The chain runs to 181 residues: Inner membrane-spanning protein YciB (181 aa).

5 consecutive transmembrane segments (helical) span residues 8 to 28 (FPIICFFVAYKFWGIYIATAA), 53 to 73 (ITLIFILLLGSFTLVFHNAIF), 76 to 96 (WKPTIVYWIFAIVLFGSHFFG), 121 to 141 (LSWALFFLILGVLNLFVVYNF), and 149 to 169 (FKLFGTLALMLVFILGQAFYI).

This sequence belongs to the YciB family.

The protein resides in the cell inner membrane. Functionally, plays a role in cell envelope biogenesis, maintenance of cell envelope integrity and membrane homeostasis. In Coxiella burnetii (strain CbuK_Q154) (Coxiella burnetii (strain Q154)), this protein is Inner membrane-spanning protein YciB.